The primary structure comprises 273 residues: MENRTNFFHLHLISDSTGETLISAGRAASAQFRSAQPIEHVYPLIRNRKQLLPVLQAIDDAPGIVLYTIVDRELASLIDERCTEMGVASVNVLEPVMNAFQIYLGAPSRRRVGAQHVMNAGYFARIEALNFTMDHDDGQMPDDYNDADVVIIGISRTSKTPTSIYLANRGIKTANIPIVYGVPLPEGLLVATKPLIVCLIATTDRISQVRENRILGATQGFDREHYTDRAAISEELKYARSLCARHNWPLIDVTRRSIEETAAAIVALRPKLR.

An ADP-binding site is contributed by 153–160 (GISRTSKT).

Belongs to the pyruvate, phosphate/water dikinase regulatory protein family. PDRP subfamily.

It catalyses the reaction N(tele)-phospho-L-histidyl/L-threonyl-[pyruvate, phosphate dikinase] + ADP = N(tele)-phospho-L-histidyl/O-phospho-L-threonyl-[pyruvate, phosphate dikinase] + AMP + H(+). It carries out the reaction N(tele)-phospho-L-histidyl/O-phospho-L-threonyl-[pyruvate, phosphate dikinase] + phosphate + H(+) = N(tele)-phospho-L-histidyl/L-threonyl-[pyruvate, phosphate dikinase] + diphosphate. Its function is as follows. Bifunctional serine/threonine kinase and phosphorylase involved in the regulation of the pyruvate, phosphate dikinase (PPDK) by catalyzing its phosphorylation/dephosphorylation. The chain is Putative pyruvate, phosphate dikinase regulatory protein from Rhizobium etli (strain CIAT 652).